The following is a 95-amino-acid chain: uncharacterized protein (95 aa).

The or 21 signal peptide spans M1 to A24. Over residues E55–E89 the composition is skewed to basic and acidic residues. Residues E55–K95 are disordered.

This is an uncharacterized protein from Haemophilus influenzae (strain ATCC 51907 / DSM 11121 / KW20 / Rd).